The chain runs to 765 residues: MQFDEEWSKADPIVHALLHQKSVTPAAWQDLFYHVYKITSWVDDGPLKIRDILTRCINDYVHEANKRIRSLQTDGSLLIGYIKEWNRFYQQANILPLPFKKIDESSRRRSVPETPEESIRTVMLEKWNEIIFMNISEQLLVEALRLVKEERDGNIIDAQNVIGIRESFVALNDRAGEDPLLVYRQSFERQFIEQTTEYYKKICGNLLNELGVLEYMVYADKKLEEEQQRAKRYLEMNSPTSGKHMEKAVIALVESFEDTILAECSKLIASKDVERLQRLYRLIRRTRSGIDTVLKCIDTHIRTEGLNDMRNNAENLSTDPERYVQQLLLMFDKFSSLVREGFCDDARLLTARDKAFRAVVNDSSIFKTEMMNKKGRTLSVESKCAELLANYCDLLLRKTQLSKKLTSEEIDEKLNQVLLVLKYVENKDVFMRFHRAHLSRRLILEMSADQEKEEMMVTKLRECGMPSDAVNKLSRMLQDIELNKDMNSSFKKALTGTNNNKSIADSINMKVLNGGAWGRGGSERIRFSLPRELEDFVPEMEAFYKKQHNGRKLCWMHHWSSGTMVFGTANGGRFDLECTTFQMAVLFCFNDRAHDKISLETLRLATELPDAELNRTLLSLVAYPKMRYQILLCDVPSTTVTARDFTDSTKFLINHDFNVVKNGKSQQRGKVNLIGRLQLSLEANAEKEHESIVALRELRVQEGIVKILKTRKTYTLAQLTMELVEILKPLFIPNRKIIKEQIDWLIENKYMERRADDINTFVYIS.

The Cullin neddylation domain maps to 696–757 (RELRVQEGIV…NKYMERRADD (62 aa)). Lys709 participates in a covalent cross-link: Glycyl lysine isopeptide (Lys-Gly) (interchain with G-Cter in NEDD8).

It belongs to the cullin family. Interacts with rbx-1 and rbx-2. In terms of processing, neddylated; which enhances the ubiquitination activity of SCF-like complex.

It functions in the pathway protein modification; protein ubiquitination. In terms of biological role, probable core component of cullin-based SCF-like E3 ubiquitin-protein ligase complexes which mediate the ubiquitination and subsequent proteasomal degradation of target proteins. In association with rbx-2 seems to be involved in meiotic cell cycle progression in the germline. Required for phosphorylation of the MAP kinase MPK-1 in the germline. The sequence is that of Cullin-5 (cul-5) from Caenorhabditis elegans.